A 166-amino-acid polypeptide reads, in one-letter code: Urease accessory protein UreE (166 aa).

Residues 135–156 are disordered; that stretch reads EQGAYGGGHHHSHHGDEEFNYG.

The protein belongs to the UreE family.

It localises to the cytoplasm. Its function is as follows. Involved in urease metallocenter assembly. Binds nickel. Probably functions as a nickel donor during metallocenter assembly. In Ectopseudomonas mendocina (strain ymp) (Pseudomonas mendocina), this protein is Urease accessory protein UreE.